We begin with the raw amino-acid sequence, 503 residues long: Transcription termination/antitermination protein NusA (503 aa).

One can recognise an S1 motif domain in the interval 139–203 (GEIINGIVKR…KGPQIFLSRV (65 aa)). The KH domain maps to 308–378 (RHKVEVVVSQ…LDVEEVIGQL (71 aa)).

The protein belongs to the NusA family. In terms of assembly, monomer. Binds directly to the core enzyme of the DNA-dependent RNA polymerase and to nascent RNA.

It is found in the cytoplasm. Functionally, participates in both transcription termination and antitermination. This Rickettsia conorii (strain ATCC VR-613 / Malish 7) protein is Transcription termination/antitermination protein NusA.